We begin with the raw amino-acid sequence, 117 residues long: Large ribosomal subunit protein bL20 (117 aa).

This sequence belongs to the bacterial ribosomal protein bL20 family.

Its function is as follows. Binds directly to 23S ribosomal RNA and is necessary for the in vitro assembly process of the 50S ribosomal subunit. It is not involved in the protein synthesizing functions of that subunit. The polypeptide is Large ribosomal subunit protein bL20 (Geotalea uraniireducens (strain Rf4) (Geobacter uraniireducens)).